Here is a 228-residue protein sequence, read N- to C-terminus: Heptaprenylglyceryl phosphate synthase (228 aa).

Lys12 contributes to the sn-glycerol 1-phosphate binding site. Mg(2+) is bound by residues Asp14 and Thr40. Residues 159–164, Gly189, and 209–210 each bind sn-glycerol 1-phosphate; these read YLEYSG and GN.

The protein belongs to the GGGP/HepGP synthase family. Group I subfamily. Homodimer. It depends on Mg(2+) as a cofactor.

It carries out the reaction sn-glycerol 1-phosphate + all-trans-heptaprenyl diphosphate = 3-heptaprenyl-sn-glycero-1-phosphate + diphosphate. The protein operates within membrane lipid metabolism; glycerophospholipid metabolism. Functionally, prenyltransferase that catalyzes in vivo the transfer of the heptaprenyl moiety of heptaprenyl pyrophosphate (HepPP; 35 carbon atoms) to the C3 hydroxyl of sn-glycerol-1-phosphate (G1P), producing heptaprenylglyceryl phosphate (HepGP). This reaction is an ether-bond-formation step in the biosynthesis of archaea-type G1P-based membrane lipids found in Bacillales. This Geobacillus sp. (strain WCH70) protein is Heptaprenylglyceryl phosphate synthase.